The chain runs to 167 residues: RNA pyrophosphohydrolase (167 aa).

The 151-residue stretch at 8 to 158 folds into the Nudix hydrolase domain; that stretch reads PYRTCVGMML…KRPVYERVVK (151 aa). Residues 47 to 68 carry the Nudix box motif; the sequence is GGVDPGEDTWEAAKRELYEETN.

This sequence belongs to the Nudix hydrolase family. RppH subfamily. The cofactor is a divalent metal cation.

Functionally, accelerates the degradation of transcripts by removing pyrophosphate from the 5'-end of triphosphorylated RNA, leading to a more labile monophosphorylated state that can stimulate subsequent ribonuclease cleavage. The sequence is that of RNA pyrophosphohydrolase from Rhodopseudomonas palustris (strain HaA2).